A 1258-amino-acid chain; its full sequence is Ice nucleation protein (1258 aa).

Residues 162 to 1217 (ATYGSTLSGT…LTAGENSVLI (1056 aa)) are octapeptide periodicity. 5 disordered regions span residues 260 to 287 (YGST…KGSD), 311 to 342 (TQTA…GYGS), 356 to 383 (YGST…KGSD), 407 to 438 (TQTA…GYGS), and 452 to 480 (YGST…GSDL). Composition is skewed to polar residues over residues 261 to 286 (GSTQ…QKGS), 311 to 334 (TQTA…QKGS), 357 to 382 (GSTQ…QKGS), 407 to 430 (TQTA…QKGS), and 453 to 480 (GSTQ…GSDL).

This sequence belongs to the bacterial ice nucleation protein family.

Its subcellular location is the cell outer membrane. Its function is as follows. Ice nucleation proteins enable bacteria to nucleate crystallization in supercooled water. The sequence is that of Ice nucleation protein (iceE) from Enterobacter agglomerans (Erwinia herbicola).